The chain runs to 173 residues: Large ribosomal subunit protein uL10 (173 aa).

Belongs to the universal ribosomal protein uL10 family. As to quaternary structure, part of the ribosomal stalk of the 50S ribosomal subunit. The N-terminus interacts with L11 and the large rRNA to form the base of the stalk. The C-terminus forms an elongated spine to which L12 dimers bind in a sequential fashion forming a multimeric L10(L12)X complex.

In terms of biological role, forms part of the ribosomal stalk, playing a central role in the interaction of the ribosome with GTP-bound translation factors. This is Large ribosomal subunit protein uL10 from Beutenbergia cavernae (strain ATCC BAA-8 / DSM 12333 / CCUG 43141 / JCM 11478 / NBRC 16432 / NCIMB 13614 / HKI 0122).